The primary structure comprises 914 residues: MEFIMKTRMFEEEGWIRKKCKVCGKPFWTLDPDRETCGDPPCDEYQFIGKPGIPKKYTLDEMREKFLKFFEKHEVYPHGRVKRYPVLPRWRDDVLLVGASIMDFQPWVISGEADPPANPLVISQPSIRFTDIDNVGITGRHFTIFEMMAHHAFNYPGKPIYWIDETVELAFEFFTKELKMKPEDITFKENPWAGGGNAGPAFEVLYRGLEVATLVFMQYKKAPENAPEDQVVIIKGDRYVPMETKVVDTGYGLERLVWMSQGTPTAYDAVLGYVVEPLKRMAGVEKIDERILMENSRLAGMFDIEDMGDLKLLRKKVAEKVGISVEELEKAIRPYELIYAIADHTKALTFMLADGVIPSNVKAGYLARLLIRKSIRHLKELGLEVPLSEIVALHIKELHKTFPEFKEMEDVILEIIDLEEKKYSETLKRGSDLVRREIAKLKKKGMSEIPLEKLITFYESHGLTPELVKEIAEKEGIKVHVPDNFYSIVAKEAEKEKEEKEEEVVDFELVKDLPETRTLYYEDPFMKEFEARVLRVIGDWIVLDQTAFYPEGGGQPYDTGVLFVNGSEVKVTNVQKVGKVIVHKVENPGLFKEGMEVRGRIDWDRRIQHMRHHTGTHVLMGALVRVLGKHVWQAGSQLTTDWARLDISHYKRISDEELREIERLANRIVMEDRKVTWEWLPRTEAEQRYGFRLYQGGVVPGRVIRVVKIEDWDVQACGGTHLPSTGLVGPIKILRTERIQDGVERIIFACGEAAIKEWQKEREILKKASQVLRVPPEKLPETAERFFNEWKEARKEVEKLKKELAKLLVYELEAKVQKVKEYEFIGEIVEGSMDDLREAVERLKKPNRIVVLVSKEGYFAISVGDNVNLNANDLAKKLTSIAGGGGGGRKDVAQGRIKDVSKAKEAIESIVKLL.

Zn(2+) contacts are provided by H613, H617, C717, and H721.

This sequence belongs to the class-II aminoacyl-tRNA synthetase family. Zn(2+) is required as a cofactor.

Its subcellular location is the cytoplasm. It carries out the reaction tRNA(Ala) + L-alanine + ATP = L-alanyl-tRNA(Ala) + AMP + diphosphate. Its function is as follows. Catalyzes the attachment of alanine to tRNA(Ala) in a two-step reaction: alanine is first activated by ATP to form Ala-AMP and then transferred to the acceptor end of tRNA(Ala). Also edits incorrectly charged Ser-tRNA(Ala) and Gly-tRNA(Ala) via its editing domain. The sequence is that of Alanine--tRNA ligase from Pyrococcus abyssi (strain GE5 / Orsay).